The sequence spans 230 residues: Ribonuclease 3 (230 aa).

The region spanning 8 to 135 is the RNase III domain; that stretch reads IVELKEKLGI…LIGAVYLQTN (128 aa). Glu48 contributes to the Mg(2+) binding site. Asp52 is a catalytic residue. Residues Asp121 and Glu124 each coordinate Mg(2+). Glu124 is a catalytic residue. In terms of domain architecture, DRBM spans 161–230; that stretch reads DYKTMIQELV…AHFAFQKLSK (70 aa).

The protein belongs to the ribonuclease III family. As to quaternary structure, homodimer. The cofactor is Mg(2+).

The protein resides in the cytoplasm. The catalysed reaction is Endonucleolytic cleavage to 5'-phosphomonoester.. Its function is as follows. Digests double-stranded RNA. Involved in the processing of primary rRNA transcript to yield the immediate precursors to the large and small rRNAs (23S and 16S). Processes some mRNAs, and tRNAs when they are encoded in the rRNA operon. Processes pre-crRNA and tracrRNA of type II CRISPR loci if present in the organism. This Natranaerobius thermophilus (strain ATCC BAA-1301 / DSM 18059 / JW/NM-WN-LF) protein is Ribonuclease 3.